The chain runs to 711 residues: Cyclic-di-AMP phosphodiesterase PgpH (711 aa).

Residues 114–133 (KSSEEGSKSPSEKSMVKSVK) form a disordered region. Transmembrane regions (helical) follow at residues 275–295 (LFKPISGLLIMIGLFIATLVY), 311–331 (ILLFSIITTLLLVIMEVVSLF), 336–356 (YNNIGYLVPIAAGAILIKLLM), 360–380 (IAILGSIILAICGSMMFNQGV), 384–404 (FNYVIGIYYLISGISGVLFLG), 413–433 (LQTGLFVAFINMVVVLSLLLI), and 448–468 (LMGVVSGFASSVLIIGLMPFF). The region spanning 501–643 (TYHHSVMVAN…ISVADSVEAA (143 aa)) is the HD domain. Residues His-504, His-533, Asp-534, His-570, His-594, and His-595 each contribute to the Mn(2+) site. Substrate is bound at residue His-504. Tyr-621 and Asp-638 together coordinate substrate. Asp-638 is a binding site for Mn(2+).

The protein belongs to the PgpH phosphodiesterase family. Requires Mn(2+) as cofactor.

Its subcellular location is the cell membrane. It catalyses the reaction 3',3'-c-di-AMP + H2O = 5'-O-phosphonoadenylyl-(3'-&gt;5')-adenosine + H(+). Its function is as follows. Probably has phosphodiesterase (PDE) activity against cyclic-di-AMP (c-di-AMP); may be the major c-di-AMP PDE in the cell. In B.subtilis c-di-AMP is a second messenger that mediates growth, DNA repair and cell wall homeostasis; it is toxic when present in excess. This chain is Cyclic-di-AMP phosphodiesterase PgpH, found in Bacillus subtilis (strain 168).